The chain runs to 237 residues: 2-C-methyl-D-erythritol 4-phosphate cytidylyltransferase (237 aa).

Belongs to the IspD/TarI cytidylyltransferase family. IspD subfamily.

The enzyme catalyses 2-C-methyl-D-erythritol 4-phosphate + CTP + H(+) = 4-CDP-2-C-methyl-D-erythritol + diphosphate. It participates in isoprenoid biosynthesis; isopentenyl diphosphate biosynthesis via DXP pathway; isopentenyl diphosphate from 1-deoxy-D-xylulose 5-phosphate: step 2/6. Its function is as follows. Catalyzes the formation of 4-diphosphocytidyl-2-C-methyl-D-erythritol from CTP and 2-C-methyl-D-erythritol 4-phosphate (MEP). The chain is 2-C-methyl-D-erythritol 4-phosphate cytidylyltransferase from Vibrio vulnificus (strain CMCP6).